Consider the following 330-residue polypeptide: DNA-directed RNA polymerase subunit alpha (330 aa).

The segment at M1–K232 is alpha N-terminal domain (alpha-NTD). The segment at E248 to E330 is alpha C-terminal domain (alpha-CTD).

It belongs to the RNA polymerase alpha chain family. Homodimer. The RNAP catalytic core consists of 2 alpha, 1 beta, 1 beta' and 1 omega subunit. When a sigma factor is associated with the core the holoenzyme is formed, which can initiate transcription.

It carries out the reaction RNA(n) + a ribonucleoside 5'-triphosphate = RNA(n+1) + diphosphate. Functionally, DNA-dependent RNA polymerase catalyzes the transcription of DNA into RNA using the four ribonucleoside triphosphates as substrates. The sequence is that of DNA-directed RNA polymerase subunit alpha from Bacteroides thetaiotaomicron (strain ATCC 29148 / DSM 2079 / JCM 5827 / CCUG 10774 / NCTC 10582 / VPI-5482 / E50).